A 365-amino-acid polypeptide reads, in one-letter code: Mitogen-activated protein kinase 13 (365 aa).

The 284-residue stretch at 25–308 (YVSPTHVGSG…AAQALTHPFF (284 aa)) folds into the Protein kinase domain. An ATP-binding site is contributed by 31-39 (VGSGAYGSV). Serine 47 carries the phosphoserine modification. Residue lysine 54 participates in ATP binding. The Proton acceptor role is filled by aspartate 150. A Phosphothreonine; by MAP2K3, MAP2K4, MAP2K6 and MAP2K7 modification is found at threonine 180. Residues 180 to 182 (TGY) carry the TXY motif. Tyrosine 182 bears the Phosphotyrosine; by MAP2K3, MAP2K4, MAP2K6 and MAP2K7 mark. A Phosphoserine modification is found at serine 350.

Belongs to the protein kinase superfamily. CMGC Ser/Thr protein kinase family. MAP kinase subfamily. In terms of assembly, interacts with MAPK8IP2. Requires Mg(2+) as cofactor. Dually phosphorylated on Thr-180 and Tyr-182 by MAP2K3/MKK3, MAP2K4/MKK4, MAP2K6/MKK6 and MAP2K7/MKK7, which activates the enzyme. Dephosphorylated by dual specificity phosphatase DUSP1.

It carries out the reaction L-seryl-[protein] + ATP = O-phospho-L-seryl-[protein] + ADP + H(+). The enzyme catalyses L-threonyl-[protein] + ATP = O-phospho-L-threonyl-[protein] + ADP + H(+). Its activity is regulated as follows. Activated by phosphorylation on threonine and tyrosine by dual specificity kinases, MAP2K3/MKK3, MAP2K6/MKK6, MAP2K4/MKK4 and MAP2K7/MKK7. Activation by ultraviolet radiation, hyperosmotic shock, anisomycin or by TNF-alpha is mediated by MAP2K3/MKK3. Inhibited by dual specificity phosphatase DUSP1. Serine/threonine kinase which acts as an essential component of the MAP kinase signal transduction pathway. MAPK13 is one of the four p38 MAPKs which play an important role in the cascades of cellular responses evoked by extracellular stimuli such as pro-inflammatory cytokines or physical stress leading to direct activation of transcription factors such as ELK1 and ATF2. Accordingly, p38 MAPKs phosphorylate a broad range of proteins and it has been estimated that they may have approximately 200 to 300 substrates each. MAPK13 is one of the less studied p38 MAPK isoforms. Some of the targets are downstream kinases such as MAPKAPK2, which are activated through phosphorylation and further phosphorylate additional targets. Plays a role in the regulation of protein translation by phosphorylating and inactivating EEF2K. Involved in cytoskeletal remodeling through phosphorylation of MAPT and STMN1. Mediates UV irradiation induced up-regulation of the gene expression of CXCL14. Plays an important role in the regulation of epidermal keratinocyte differentiation, apoptosis and skin tumor development. Phosphorylates the transcriptional activator MYB in response to stress which leads to rapid MYB degradation via a proteasome-dependent pathway. MAPK13 also phosphorylates and down-regulates PRKD1 during regulation of insulin secretion in pancreatic beta cells. This is Mitogen-activated protein kinase 13 (MAPK13) from Pan troglodytes (Chimpanzee).